A 270-amino-acid polypeptide reads, in one-letter code: Diaminopimelate epimerase (270 aa).

Substrate is bound by residues asparagine 15, glutamine 49, and asparagine 66. Cysteine 75 (proton donor) is an active-site residue. Substrate is bound by residues 76 to 77 (GN), asparagine 155, asparagine 187, and 204 to 205 (ER). The active-site Proton acceptor is the cysteine 213. 214–215 (GS) provides a ligand contact to substrate.

It belongs to the diaminopimelate epimerase family. In terms of assembly, homodimer.

The protein localises to the cytoplasm. It carries out the reaction (2S,6S)-2,6-diaminopimelate = meso-2,6-diaminopimelate. It participates in amino-acid biosynthesis; L-lysine biosynthesis via DAP pathway; DL-2,6-diaminopimelate from LL-2,6-diaminopimelate: step 1/1. Functionally, catalyzes the stereoinversion of LL-2,6-diaminopimelate (L,L-DAP) to meso-diaminopimelate (meso-DAP), a precursor of L-lysine and an essential component of the bacterial peptidoglycan. The protein is Diaminopimelate epimerase of Rickettsia conorii (strain ATCC VR-613 / Malish 7).